Reading from the N-terminus, the 400-residue chain is MSSAPNIFLSAGEASGEHYGAALIPALRALYADARFFGLGGQRMQALGMERIVRAEDVAVMGITEVVRHLPRIYGEYLKLKRSIIERKPDLAILIDFPDVNLSLARTLHEQGTPVLYFVSPQLWAWKKYRIRKVQRYVDRMLVIFPFEEAFYQGHGVQADFVGHPLTEVPLPTITRAEFAAAHHLDPAKHWVGLLPGSRGKEIRLNLPEMIAAAKQLGHEHEYVLPLAPTLTEAQRGHVRQMLAALTASAHDAAHDQAPRITVVADARATLHHARASIVASGTATVEAALIGNPFVVVYRVSPLSYAIARRVVTVPHVAMANLIADRRVVPELIQDDFTAANIVREMQPLVASDRAREQMMTGLAEVRAKLSTPGSSAIARVTKVAHEMLQRRAALSRVR.

Belongs to the LpxB family.

It carries out the reaction a lipid X + a UDP-2-N,3-O-bis[(3R)-3-hydroxyacyl]-alpha-D-glucosamine = a lipid A disaccharide + UDP + H(+). It participates in bacterial outer membrane biogenesis; LPS lipid A biosynthesis. In terms of biological role, condensation of UDP-2,3-diacylglucosamine and 2,3-diacylglucosamine-1-phosphate to form lipid A disaccharide, a precursor of lipid A, a phosphorylated glycolipid that anchors the lipopolysaccharide to the outer membrane of the cell. The protein is Lipid-A-disaccharide synthase of Acidobacterium capsulatum (strain ATCC 51196 / DSM 11244 / BCRC 80197 / JCM 7670 / NBRC 15755 / NCIMB 13165 / 161).